The following is a 458-amino-acid chain: Alpha-1,3/1,6-mannosyltransferase ALG2 (458 aa).

Residues Asn-57 and Asn-169 are each glycosylated (N-linked (GlcNAc...) asparagine). A helical transmembrane segment spans residues 438–458 (NISIIYVVSIIFAVLLKVFVF).

The protein belongs to the glycosyltransferase group 1 family.

It localises to the endoplasmic reticulum membrane. The enzyme catalyses a beta-D-Man-(1-&gt;4)-beta-D-GlcNAc-(1-&gt;4)-alpha-D-GlcNAc-diphospho-di-trans,poly-cis-dolichol + GDP-alpha-D-mannose = an alpha-D-Man-(1-&gt;3)-beta-D-Man-(1-&gt;4)-beta-D-GlcNAc-(1-&gt;4)-alpha-D-GlcNAc-diphospho-di-trans,poly-cis-dolichol + GDP + H(+). It catalyses the reaction an alpha-D-Man-(1-&gt;3)-beta-D-Man-(1-&gt;4)-beta-D-GlcNAc-(1-&gt;4)-alpha-D-GlcNAc-diphospho-di-trans,poly-cis-dolichol + GDP-alpha-D-mannose = an alpha-D-Man-(1-&gt;3)-[alpha-D-Man-(1-&gt;6)]-beta-D-Man-(1-&gt;4)-beta-D-GlcNAc-(1-&gt;4)-alpha-D-GlcNAc-diphospho-di-trans,poly-cis-dolichol + GDP + H(+). The protein operates within protein modification; protein glycosylation. Mannosylates Man(2)GlcNAc(2)-dolichol diphosphate and Man(1)GlcNAc(2)-dolichol diphosphate to form Man(3)GlcNAc(2)-dolichol diphosphate. This Candida glabrata (strain ATCC 2001 / BCRC 20586 / JCM 3761 / NBRC 0622 / NRRL Y-65 / CBS 138) (Yeast) protein is Alpha-1,3/1,6-mannosyltransferase ALG2 (ALG2).